Consider the following 3073-residue polypeptide: MRKHILHQRLCGLILVSSFIFLTDSLSLKGKRLDFYGEGKAYVSLTYTMPELSRLTACIDLISMTNSSHYWMAFIYITNNTLLGREDVDLGLAGDHQQLILYSFGKTFYVSYHLIPFHWHTLCLVWDGVKGRLELFRNKERILAIMDQPHRLSPNGTLVLGHFPRNGEGQIKTVIPRFTSSLYYFQLWDRILENEEFMTCFYGNVVSWEDDVWLIHKISPTVDRRLRCFVSENMTIQETSTNVSQQIDLTTSSQTTGLNPHKTSHSSTLLPEGMADSTINSTAISYANTVPSPLATVSAAKDLKTSTTETATFLTDTLFTSTATPLPTQTVTEHSYLGKTRTSKRVEAMATEIFHSATATDLIDTSVFTKNYTVSETSTTKSKSAVGKTTLFLNESTSIAPTPCPKHKSTDVAILHTSKSGQEFLVSSAARTVSWSTLEETSPITTDVGIVSTFPPESLLTSTASPVSSTFPEIQLASTLSTTDSEMASTVHSVLPMQTIPTPRTVKPESGSTNFQDVFSPSMEDALSVSMPKETTFMAFSSITSSPITRTQDEQIAIDAESTHLTIIPGTKFVPTLAEASLFPTIEGQAYTQDTPTTDEPMLTLTSTKSPSTYNASESVLTSITIKSDYQFFTNETTWTSKSGQNLLTSMNTTTIPTFTSNKTLTLPFQGNATNRDHSSMTTNVSPIEASTESKVTTSSDATTASYTTALFKPTSQWLSHFTSVSGITSIASQPESKLTTLLLKSNSMPTVATNEFPSIPSEPVAPSVNTSTLTDIKPNFSTEKSISETIQIETNGVSSFGDTLAPLPMSATTQRVYTTVTKETTSRHPKVKSTISTVAEASPFSTMLEVTDESEQMVTASVTISPFTDIEKLTTALSKETATAEVGVSWLSTKLKESMPESSHNGTTESFNSTHTYTVDWTSEKSKGNSASSPNSASTQALPELPSSSTMKTMGVTFSTNSSQRTAASLSAGILSPQTASTHALVTPQLLTHTFSLPVNISAVTSPKTTMVFFDETKVTLSQPSTLARDFTTSMPSVGSTLPTVTMTTELVPPVSPTASTISDSMFTHRDLLHTTSEVTTISSTTAHMAISSLRETLVSSLRPPTPVITKAISTIPSISSDSVSPSIHTLVCSRPSPNNVTIVSSTYVSSTTSTSVATPSESHFSFPYAFSSGGDVTMASGPTGTSAGGEAMPPNTFVNKFITSVDHESTTYFVNTPVSTQSVFATSMVSSDKEQTNISMEKTLRTTGVAEISPSKNSFILDSQSTFPWEMTDTELSETTEISSHQTHLPSEILPGYSDSGNLTTFSTSGSTQSAQTLSSSTIIGVRVSEGSTSLEKTALPSQVQTVTKSLTHDKERTSALSEYPPRTVEKIMSSSPVTHQATGHLATSIVDASRTTRISHPVLINTTLSYLLSLKTKPEATQIASSTSGSTENFPNSFSPFTTGLLSTNFTMITPNGSTTVLSIPNEPTNLPKKTSMEASTPISQMDLLALNVTAFTSKKVSDTHTMLMTKSSRTIHIGTLKSVSIGTFGLKSEKSEMPVNNSDFSTTVLYSDTSTRLGEFFTSSSSLPPKATKTTQASTLNTTPVAHAGPTSQRTVFSSTFSNSSVVEVPLNYTTAHFSSPTQRGFLSMKTIPTTSMAGISTSVIGATSSSLSSSKNTEPISSIPKTMFSLLLSTTQQPSQENGAPTLDILPGITVSSGGATDLINANSRATIPANELSTTPSDNFYTFLNTQDSPTLTNSKVTPRPTESVKSTPTHLSFDTRKMNILTELTKSGPCVTTPVLYPLWTQTSTAPPLTSHLYSPHSTKAKFPLASQMAEYPAWATGITPSITQALLTTSRNTQRVEDSPFPVFTTKVMTPNRMEVETLHSPSGTLATSTTSQIGLVSRDVTVMPLISTSESLPSLGISESTSLSISSTFPPTTLAAILPTFEKTAMPVTPGITLSSNPSVNSRATSPTWSSSSLPSDSRASIFTPSRLLTSSSGEMSESTFPASDIIATYSNFTVAPLSDGSATIATQATSTTTLDIITANSLTSPPIPSKDKDGSLHTSTFLESSLRTTGADSSTDMSERMSFGRTSISPSLTRHDLSIGSLTVSSPTNTSPWSKVPVTSESHTLFPSKSTLDSVMSTATTTSTAIGTSFPLMSTEMAHPSTATGFSLVSSSFETTWMDSIFSSLFTQPSTSPTAKESTVSFYNIKMSFSVFDEEPRVLVTTVIHDLTKDWLNFMFQNSEFSLANLAIQIKSRKTSKEETAMYRYILEQKKGQGMDAIFHVPYSCACWVIIKAKSSLESVELISSIRTKIHGNLTHGNFTQDQLTLLVKSDHVVVEKLEPGKCEADETPSKYKGTYKWPLTDPTETAQERCIKNENRNATRICSISIQTGKCQWEKPRLKQCKLLQGLPDKIVDLANITISDENADDVAEHILNLVNESPPLDEEETKIIVSKVADISNCDEISINLTQIILQILNTVTEKQSDSASNLPPVSNEILRIIERVGHKMEFAGRTANLTVAKLALAVLRVDHKFEGMAFSIQSSEEVIAPQIFLGDIPLRKALASIYLPKSLREKVPLDGLQTILFNFFGQTSLFKAKTITSELMTYVVSASISNTSIQNLADPVIIILKHIQGDWNYDQVYCAFWDFDTNNGLGGWNPSGCKLKESNINYTICQCNHLTHFGVLMDLSRSTVDAVNERILVIITYTGCGISSIFLGIAMVTYIAFHKLRKDYPSKILINLCTALLMLNLAFLVNSWLTSFQKVGLCITAAVALHYFLLVSLTWMGLEAVHMYFALVKVFNTYIPNYILKFCLAGWGIPAITVAIILSVRKDLYGTLSPTTPFCWIKDDHIFYISVVAYFCLIFLMNLSMFCTVLVQLTSVKSQSQKTRKKMILNDLKGTISLTFLLGLTWGFAFFAWGPVRIFFLYLFAICNTLQGFLIFVFYCVMKESVREQWHMPLHCRWLRLENFAGWINVRHKQKRLKKNNESKLLTPSLMSTTTFKSIGSVPSIPSEINFSNGDFDDSPDTFSFLSCKAAPTFIRRALPAEIQTNSTQKQRSFPINVSRDTHLTPSSGLGEMFNL.

The first 25 residues, 1–25 (MRKHILHQRLCGLILVSSFIFLTDS), serve as a signal peptide directing secretion. Topologically, residues 26–2691 (LSLKGKRLDF…RSTVDAVNER (2666 aa)) are extracellular. The region spanning 29–228 (KGKRLDFYGE…SPTVDRRLRC (200 aa)) is the Pentraxin (PTX) domain. Disulfide bonds link Cys58/Cys123 and Cys200/Cys228. Asn233 is a glycosylation site (N-linked (GlcNAc...) asparagine). A disordered region spans residues 253 to 272 (SQTTGLNPHKTSHSSTLLPE). Asn662 carries N-linked (GlcNAc...) asparagine glycosylation. Composition is skewed to polar residues over residues 671 to 696 (GNAT…ESKV) and 929 to 951 (GNSA…SSST). 2 disordered regions span residues 671–697 (GNAT…SKVT) and 924–951 (SEKS…SSST). Asn1141, Asn1304, and Asn1495 each carry an N-linked (GlcNAc...) asparagine glycan. Disordered regions lie at residues 1565–1595 (FTSS…AGPT), 1741–1760 (TLTN…STPT), and 1945–1972 (ITLS…SDSR). Positions 1945–1954 (ITLSSNPSVN) are enriched in polar residues. Positions 1955–1972 (SRATSPTWSSSSLPSDSR) are enriched in low complexity. A GAIN-B domain is found at 2535 to 2684 (SSEEVIAPQI…GVLMDLSRST (150 aa)). Disulfide bonds link Cys2635–Cys2666 and Cys2654–Cys2668. Positions 2635-2684 (CAFWDFDTNNGLGGWNPSGCKLKESNINYTICQCNHLTHFGVLMDLSRST) are GPS. Residues 2673-2684 (HFGVLMDLSRST) form a stachel region. The helical transmembrane segment at 2692 to 2712 (ILVIITYTGCGISSIFLGIAM) threads the bilayer. The Cytoplasmic segment spans residues 2713-2728 (VTYIAFHKLRKDYPSK). The helical transmembrane segment at 2729 to 2749 (ILINLCTALLMLNLAFLVNSW) threads the bilayer. Residues 2750 to 2755 (LTSFQK) lie on the Extracellular side of the membrane. The helical transmembrane segment at 2756 to 2776 (VGLCITAAVALHYFLLVSLTW) threads the bilayer. Cys2759 and Cys2836 are oxidised to a cystine. Residues 2777–2798 (MGLEAVHMYFALVKVFNTYIPN) are Cytoplasmic-facing. The helical transmembrane segment at 2799–2819 (YILKFCLAGWGIPAITVAIIL) threads the bilayer. The Extracellular portion of the chain corresponds to 2820-2842 (SVRKDLYGTLSPTTPFCWIKDDH). A helical membrane pass occupies residues 2843–2863 (IFYISVVAYFCLIFLMNLSMF). The Cytoplasmic portion of the chain corresponds to 2864–2892 (CTVLVQLTSVKSQSQKTRKKMILNDLKGT). The chain crosses the membrane as a helical span at residues 2893 to 2913 (ISLTFLLGLTWGFAFFAWGPV). Position 2914 (Arg2914) is a topological domain, extracellular. A helical transmembrane segment spans residues 2915-2935 (IFFLYLFAICNTLQGFLIFVF). The Cytoplasmic portion of the chain corresponds to 2936–3073 (YCVMKESVRE…SSGLGEMFNL (138 aa)).

The protein belongs to the G-protein coupled receptor 2 family. Adhesion G-protein coupled receptor (ADGR) subfamily. Homodimer; homodimerizes via its Pentraxin domain in a calcium-independent manner. Heterodimer of 2 chains generated by proteolytic processing; the large extracellular N-terminal fragment and the membrane-bound C-terminal fragment predominantly remain associated and non-covalently linked. Autoproteolytically processed at the GPS region of the GAIN-B domain; this cleavage modulates receptor activity.

The protein localises to the membrane. Forms a heterodimer of 2 chains generated by proteolytic processing that remain associated through non-covalent interactions mediated by the GAIN-B domain. In the inactivated receptor, the Stachel sequence (also named stalk) is embedded in the GAIN-B domain, where it adopts a beta-strand conformation. On activation, the Stachel moves into the 7 transmembrane region and adopts a twisted hook-shaped configuration that forms contacts within the receptor, leading to coupling of a G-alpha protein, which activates signaling. The cleaved GAIN-B and N-terminal domains can then dissociate from the rest of the receptor. Its function is as follows. Orphan adhesion G-protein coupled receptor (aGPCR). Ligand binding causes a conformation change that triggers signaling via guanine nucleotide-binding proteins (G proteins) and modulates the activity of downstream effectors, such as adenylate cyclase. ADGRG4 is coupled to G(s) G proteins and mediates activation of adenylate cyclase activity. May be act as sensor of mechanical forces. The polypeptide is Adhesion G-protein coupled receptor G4 (Mus musculus (Mouse)).